The following is a 431-amino-acid chain: CCA-adding enzyme (431 aa).

The ATP site is built by serine 50 and lysine 53. Positions 50 and 53 each coordinate CTP. 3 residues coordinate Mg(2+): aspartate 61, aspartate 63, and aspartate 112. Residues histidine 135, lysine 155, and tyrosine 164 each coordinate ATP. Positions 135, 155, and 164 each coordinate CTP.

The protein belongs to the tRNA nucleotidyltransferase/poly(A) polymerase family. Archaeal CCA-adding enzyme subfamily. As to quaternary structure, homodimer. The cofactor is Mg(2+).

The catalysed reaction is a tRNA precursor + 2 CTP + ATP = a tRNA with a 3' CCA end + 3 diphosphate. The enzyme catalyses a tRNA with a 3' CCA end + 2 CTP + ATP = a tRNA with a 3' CCACCA end + 3 diphosphate. Its function is as follows. Catalyzes the addition and repair of the essential 3'-terminal CCA sequence in tRNAs without using a nucleic acid template. Adds these three nucleotides in the order of C, C, and A to the tRNA nucleotide-73, using CTP and ATP as substrates and producing inorganic pyrophosphate. tRNA 3'-terminal CCA addition is required both for tRNA processing and repair. Also involved in tRNA surveillance by mediating tandem CCA addition to generate a CCACCA at the 3' terminus of unstable tRNAs. While stable tRNAs receive only 3'-terminal CCA, unstable tRNAs are marked with CCACCA and rapidly degraded. The chain is CCA-adding enzyme from Thermoplasma acidophilum (strain ATCC 25905 / DSM 1728 / JCM 9062 / NBRC 15155 / AMRC-C165).